A 550-amino-acid chain; its full sequence is Glucose-6-phosphate isomerase (550 aa).

The active-site Proton donor is glutamate 355. Active-site residues include histidine 386 and lysine 512.

It belongs to the GPI family.

Its subcellular location is the cytoplasm. The enzyme catalyses alpha-D-glucose 6-phosphate = beta-D-fructose 6-phosphate. The protein operates within carbohydrate biosynthesis; gluconeogenesis. Its pathway is carbohydrate degradation; glycolysis; D-glyceraldehyde 3-phosphate and glycerone phosphate from D-glucose: step 2/4. Functionally, catalyzes the reversible isomerization of glucose-6-phosphate to fructose-6-phosphate. The sequence is that of Glucose-6-phosphate isomerase from Rhodococcus opacus (strain B4).